We begin with the raw amino-acid sequence, 326 residues long: Putative F-box protein At3g22710 (326 aa).

The F-box domain maps to 1–50 (MTMPDLPPDLVEEILSRVPATSVKKLRSTCTQWNAIFKDERFTEKHFSKA).

The chain is Putative F-box protein At3g22710 from Arabidopsis thaliana (Mouse-ear cress).